Reading from the N-terminus, the 368-residue chain is tRNA 2-selenouridine synthase (368 aa).

The region spanning 15-138 is the Rhodanese domain; sequence FLNQHPIMDV…MRQYLIGVIE (124 aa). The active-site S-selanylcysteine intermediate is Cys-98.

Belongs to the SelU family. As to quaternary structure, monomer.

The enzyme catalyses 5-methylaminomethyl-2-thiouridine(34) in tRNA + selenophosphate + (2E)-geranyl diphosphate + H2O + H(+) = 5-methylaminomethyl-2-selenouridine(34) in tRNA + (2E)-thiogeraniol + phosphate + diphosphate. The catalysed reaction is 5-methylaminomethyl-2-thiouridine(34) in tRNA + (2E)-geranyl diphosphate = 5-methylaminomethyl-S-(2E)-geranyl-thiouridine(34) in tRNA + diphosphate. It catalyses the reaction 5-methylaminomethyl-S-(2E)-geranyl-thiouridine(34) in tRNA + selenophosphate + H(+) = 5-methylaminomethyl-2-(Se-phospho)selenouridine(34) in tRNA + (2E)-thiogeraniol. It carries out the reaction 5-methylaminomethyl-2-(Se-phospho)selenouridine(34) in tRNA + H2O = 5-methylaminomethyl-2-selenouridine(34) in tRNA + phosphate. Involved in the post-transcriptional modification of the uridine at the wobble position (U34) of tRNA(Lys), tRNA(Glu) and tRNA(Gln). Catalyzes the conversion of 2-thiouridine (S2U-RNA) to 2-selenouridine (Se2U-RNA). Acts in a two-step process involving geranylation of 2-thiouridine (S2U) to S-geranyl-2-thiouridine (geS2U) and subsequent selenation of the latter derivative to 2-selenouridine (Se2U) in the tRNA chain. This Shewanella baltica (strain OS155 / ATCC BAA-1091) protein is tRNA 2-selenouridine synthase.